Reading from the N-terminus, the 170-residue chain is Non-classical export protein 102 (170 aa).

Residues 1 to 11 (MLAIGDVILRA) are Cytoplasmic-facing. Residues 6–141 (DVILRAFNFV…TFIFIASAIF (136 aa)) form the MARVEL domain. Residues 12 to 32 (FNFVFLVIALGLTGSLAATTI) traverse the membrane as a helical segment. The Extracellular portion of the chain corresponds to 33 to 38 (TQHNPQ). The helical transmembrane segment at 39-61 (INFAVFAAAFGLLTSSFYGVFAY) threads the bilayer. The Cytoplasmic portion of the chain corresponds to 62–76 (FVAAFAWPVILFVFD). Residues 77–97 (FLNFVFTFAAATAIAAGIRAH) form a helical membrane-spanning segment. Over 98–125 (SCSNQDYLDDNNIAQGSSGRCRKAQAST) the chain is Extracellular. Residues 126 to 146 (AFLYFSTFIFIASAIFSAISL) form a helical membrane-spanning segment. Over 147–170 (SKGGLFGHSSRPAPRTGVPTMSQV) the chain is Cytoplasmic.

Belongs to the NCE102 family.

The protein resides in the cell membrane. Involved in membrane organization. Involved in a novel pathway of export of proteins that lack a cleavable signal sequence. Non-classical export pathway also functions as an alternative clearance/detoxification pathway to eliminate damaged material, when the basic repair pathway is not sufficient. Regulates actin organization and subsequent morphogenesis and pathogenesis. The protein is Non-classical export protein 102 of Candida albicans (strain SC5314 / ATCC MYA-2876) (Yeast).